The chain runs to 468 residues: SVGFKAGVKEYKLTYYTPEYQTKDTDILAAFRVTPQPGVPPEEAGAAVAAESSTGTWTTVWTDGLTSLDRYKGRCYRIERVVGEKDQYIAYVAYPLDLFEEGSVTNMFTSIVGNVFGFKALRALRLEDLRIPPAYVKTFQGPPHGIQVERDKLNKYGRPLLGCTIKPKLGLSAKNYGRAVYECLRGGLDFTKDDENVNSQPFMRWRDRFLFCAEALFKAQVETGEIKGHYLNATAGTCEEMIKRAVFARELGVPIVMHDYLTGGFTANTSLAHYCRDNGLLLHIHRAMHAVIDRQKNHGIHFRVLAKALRMSGGDHIHSGTVVGKLEGERDITLGFVDLLRDDFVEQDRSRGIYFTQDWVSLPGVLPVASGGIHVWHMPALTEIFGDDSVLQFGGGTLGHPWGNAPGAVANRVALEACVKARNEGRDLAREGNEIIREASKWSPELAAACEVWKEIVFNFAAVDVLDK.

Lysine 5 is subject to N6,N6,N6-trimethyllysine. 2 residues coordinate substrate: asparagine 114 and threonine 164. Catalysis depends on lysine 166, which acts as the Proton acceptor. Lysine 168 is a substrate binding site. Lysine 192, aspartate 194, and glutamate 195 together coordinate Mg(2+). Lysine 192 is subject to N6-carboxylysine. Catalysis depends on histidine 285, which acts as the Proton acceptor. Substrate is bound by residues arginine 286, histidine 318, and serine 370.

This sequence belongs to the RuBisCO large chain family. Type I subfamily. In terms of assembly, heterohexadecamer of 8 large chains and 8 small chains; disulfide-linked. The disulfide link is formed within the large subunit homodimers. Mg(2+) is required as a cofactor. In terms of processing, the disulfide bond which can form in the large chain dimeric partners within the hexadecamer appears to be associated with oxidative stress and protein turnover.

It localises to the plastid. The protein resides in the chloroplast. It catalyses the reaction 2 (2R)-3-phosphoglycerate + 2 H(+) = D-ribulose 1,5-bisphosphate + CO2 + H2O. It carries out the reaction D-ribulose 1,5-bisphosphate + O2 = 2-phosphoglycolate + (2R)-3-phosphoglycerate + 2 H(+). Its function is as follows. RuBisCO catalyzes two reactions: the carboxylation of D-ribulose 1,5-bisphosphate, the primary event in carbon dioxide fixation, as well as the oxidative fragmentation of the pentose substrate in the photorespiration process. Both reactions occur simultaneously and in competition at the same active site. The protein is Ribulose bisphosphate carboxylase large chain of Datura stramonium (Jimsonweed).